The primary structure comprises 349 residues: Phenylalanine--tRNA ligase alpha subunit (349 aa).

Glutamate 259 is a Mg(2+) binding site.

This sequence belongs to the class-II aminoacyl-tRNA synthetase family. Phe-tRNA synthetase alpha subunit type 1 subfamily. In terms of assembly, tetramer of two alpha and two beta subunits. Requires Mg(2+) as cofactor.

The protein localises to the cytoplasm. The catalysed reaction is tRNA(Phe) + L-phenylalanine + ATP = L-phenylalanyl-tRNA(Phe) + AMP + diphosphate + H(+). The chain is Phenylalanine--tRNA ligase alpha subunit from Lactobacillus johnsonii (strain CNCM I-12250 / La1 / NCC 533).